The sequence spans 404 residues: Multidrug resistance protein MdtG (404 aa).

11 helical membrane passes run 19-39 (LGCF…PLYV), 56-76 (LVFS…GGLA), 90-110 (LGMA…QFLI), 113-133 (ALLG…ATQV), 144-164 (TLST…GLLA), 171-191 (PVFF…FFFI), 222-242 (LFVT…ILTL), 254-274 (IAFI…LSAP), 288-308 (ILIV…FVQT), 317-337 (FLLG…LVYN), and 376-396 (AVFC…WNSL).

This sequence belongs to the major facilitator superfamily. DHA1 family. MdtG (TC 2.A.1.2.20) subfamily.

It is found in the cell inner membrane. This chain is Multidrug resistance protein MdtG, found in Salmonella schwarzengrund (strain CVM19633).